A 433-amino-acid chain; its full sequence is Serine hydroxymethyltransferase (433 aa).

Residue 121–123 coordinates (6S)-5,6,7,8-tetrahydrofolate; it reads AHV. An N6-(pyridoxal phosphate)lysine modification is found at lysine 227. Glutamate 243 serves as a coordination point for (6S)-5,6,7,8-tetrahydrofolate.

This sequence belongs to the SHMT family. Homodimer. Pyridoxal 5'-phosphate is required as a cofactor.

The protein resides in the cytoplasm. It carries out the reaction 5,10-methylenetetrahydrosulfopterin + glycine + H2O = tetrahydrosulfopterin + L-serine. The protein operates within amino-acid biosynthesis; glycine biosynthesis; glycine from L-serine: step 1/1. Its activity is regulated as follows. Is completely inhibited by addition of NaCNBH(3) in vitro; this reagent is a known inhibitor of PLP enzymes, that reduces the internal aldimine of PLP to the catalytically inactive and stable secondary amine. Is also inhibited by L-cysteine, which forms a thiazolidine complex with the active site PLP. Its function is as follows. Catalyzes the reversible interconversion of serine and glycine with the modified folate sulfopterin serving as the one-carbon carrier. Cannot use tetrahydrofolate (THF or H4PteGlu) as the pteridine substrate. Also exhibits a pteridine-independent aldolase activity toward beta-hydroxyamino acids, producing glycine and aldehydes, via a retro-aldol mechanism. Thus, is able to catalyze the cleavage of both allo-threonine and beta-phenylserine. The chain is Serine hydroxymethyltransferase from Saccharolobus solfataricus (strain ATCC 35092 / DSM 1617 / JCM 11322 / P2) (Sulfolobus solfataricus).